The following is a 458-amino-acid chain: SH2 domain-containing protein 7 (458 aa).

Residues 51 to 142 (WFHGFITRKQ…PFGETLAAAC (92 aa)) form the SH2 domain. Disordered stretches follow at residues 204-235 (RSVS…SPAG) and 267-326 (AGSL…TLGS). A compositionally biased stretch (basic and acidic residues) spans 278–288 (PSGKLSDEDQN). The span at 304 to 326 (QGSTMPYTSLGFSLPPSSETLGS) shows a compositional bias: polar residues.

The protein is SH2 domain-containing protein 7 (Sh2d7) of Mus musculus (Mouse).